Here is a 304-residue protein sequence, read N- to C-terminus: Recombination-associated protein RdgC (304 aa).

This sequence belongs to the RdgC family.

The protein localises to the cytoplasm. The protein resides in the nucleoid. Its function is as follows. May be involved in recombination. This Paraburkholderia phymatum (strain DSM 17167 / CIP 108236 / LMG 21445 / STM815) (Burkholderia phymatum) protein is Recombination-associated protein RdgC.